Consider the following 342-residue polypeptide: [Citrate [pro-3S]-lyase] ligase (342 aa).

Residues 1 to 127 (MTLILKRVQL…RAVLMENSRE (127 aa)) enclose the N-acetyltransferase domain.

The enzyme catalyses holo-[citrate lyase ACP] + acetate + ATP = acetyl-[citrate lyase ACP] + AMP + diphosphate. Functionally, acetylation of prosthetic group (2-(5''-phosphoribosyl)-3'-dephosphocoenzyme-A) of the gamma subunit of citrate lyase. The polypeptide is [Citrate [pro-3S]-lyase] ligase (citC) (Klebsiella pneumoniae).